We begin with the raw amino-acid sequence, 670 residues long: UvrABC system protein B (670 aa).

In terms of domain architecture, Helicase ATP-binding spans 26 to 183 (EGLENGLAHQ…RRLSELQYSR (158 aa)). 39–46 (GVTGSGKT) contributes to the ATP binding site. Positions 92–115 (YYDYYQPEAYVPSSDTFIEKDASV) match the Beta-hairpin motif. The Helicase C-terminal domain maps to 431–597 (QVDDLLSEIR…GLNKKIGDIL (167 aa)). Residues 600-620 (GQPSTRGKGKGRGGKVADTNN) are disordered. In terms of domain architecture, UVR spans 630-665 (DQKIRELEAKMYTHAQNLEFEQAAELRDQVHQLRQQ).

Belongs to the UvrB family. In terms of assembly, forms a heterotetramer with UvrA during the search for lesions. Interacts with UvrC in an incision complex.

The protein localises to the cytoplasm. In terms of biological role, the UvrABC repair system catalyzes the recognition and processing of DNA lesions. A damage recognition complex composed of 2 UvrA and 2 UvrB subunits scans DNA for abnormalities. Upon binding of the UvrA(2)B(2) complex to a putative damaged site, the DNA wraps around one UvrB monomer. DNA wrap is dependent on ATP binding by UvrB and probably causes local melting of the DNA helix, facilitating insertion of UvrB beta-hairpin between the DNA strands. Then UvrB probes one DNA strand for the presence of a lesion. If a lesion is found the UvrA subunits dissociate and the UvrB-DNA preincision complex is formed. This complex is subsequently bound by UvrC and the second UvrB is released. If no lesion is found, the DNA wraps around the other UvrB subunit that will check the other stand for damage. This chain is UvrABC system protein B, found in Yersinia enterocolitica serotype O:8 / biotype 1B (strain NCTC 13174 / 8081).